The primary structure comprises 197 residues: 7-methyl-GTP pyrophosphatase (197 aa).

Catalysis depends on Asp69, which acts as the Proton acceptor.

Belongs to the Maf family. YceF subfamily. A divalent metal cation serves as cofactor.

It is found in the cytoplasm. The catalysed reaction is N(7)-methyl-GTP + H2O = N(7)-methyl-GMP + diphosphate + H(+). Functionally, nucleoside triphosphate pyrophosphatase that hydrolyzes 7-methyl-GTP (m(7)GTP). May have a dual role in cell division arrest and in preventing the incorporation of modified nucleotides into cellular nucleic acids. The chain is 7-methyl-GTP pyrophosphatase from Syntrophotalea carbinolica (strain DSM 2380 / NBRC 103641 / GraBd1) (Pelobacter carbinolicus).